The sequence spans 1157 residues: uncharacterized protein (1157 aa).

An N-terminal signal peptide occupies residues 1–18 (MNRNIFITLLISLLALSG). Residue C19 is the site of N-palmitoyl cysteine attachment. C19 carries the S-diacylglycerol cysteine lipid modification. 4 consecutive transmembrane segments (helical) span residues 292–312 (LSVS…FLIG), 394–414 (LGFI…LLIF), 423–443 (ALIT…FMLF), and 458–478 (ISYA…GMII). Positions 1134–1157 (QYQKPVENSGRKLRKLEDHLRNMK) are disordered. The span at 1148–1157 (KLEDHLRNMK) shows a compositional bias: basic and acidic residues.

The protein belongs to the TrbL/VirB6 family.

It is found in the cell membrane. This is an uncharacterized protein from Rickettsia bellii (strain RML369-C).